A 454-amino-acid chain; its full sequence is Bifunctional protein GlmU (454 aa).

The pyrophosphorylase stretch occupies residues 1-240; that stretch reads MNVSVVILAA…EEEFMGVNSK (240 aa). Residues 8–11, K22, and 87–88 contribute to the UDP-N-acetyl-alpha-D-glucosamine site; these read LAAG and GT. Residue D119 participates in Mg(2+) binding. UDP-N-acetyl-alpha-D-glucosamine is bound by residues G152, E166, N181, and N238. N238 serves as a coordination point for Mg(2+). Residues 241 to 261 form a linker region; the sequence is IQLACAQEIMLQRLREKAMEQ. The interval 262-454 is N-acetyltransferase; that stretch reads GVIMNLPHTI…SDKNEEKKEQ (193 aa). Residues R325 and K342 each contribute to the UDP-N-acetyl-alpha-D-glucosamine site. H353 (proton acceptor) is an active-site residue. Positions 356 and 367 each coordinate UDP-N-acetyl-alpha-D-glucosamine. Acetyl-CoA contacts are provided by residues A370, 376-377, S395, A413, and R430; that span reads NY.

This sequence in the N-terminal section; belongs to the N-acetylglucosamine-1-phosphate uridyltransferase family. It in the C-terminal section; belongs to the transferase hexapeptide repeat family. As to quaternary structure, homotrimer. It depends on Mg(2+) as a cofactor.

The protein resides in the cytoplasm. The catalysed reaction is alpha-D-glucosamine 1-phosphate + acetyl-CoA = N-acetyl-alpha-D-glucosamine 1-phosphate + CoA + H(+). It catalyses the reaction N-acetyl-alpha-D-glucosamine 1-phosphate + UTP + H(+) = UDP-N-acetyl-alpha-D-glucosamine + diphosphate. Its pathway is nucleotide-sugar biosynthesis; UDP-N-acetyl-alpha-D-glucosamine biosynthesis; N-acetyl-alpha-D-glucosamine 1-phosphate from alpha-D-glucosamine 6-phosphate (route II): step 2/2. It functions in the pathway nucleotide-sugar biosynthesis; UDP-N-acetyl-alpha-D-glucosamine biosynthesis; UDP-N-acetyl-alpha-D-glucosamine from N-acetyl-alpha-D-glucosamine 1-phosphate: step 1/1. The protein operates within bacterial outer membrane biogenesis; LPS lipid A biosynthesis. In terms of biological role, catalyzes the last two sequential reactions in the de novo biosynthetic pathway for UDP-N-acetylglucosamine (UDP-GlcNAc). The C-terminal domain catalyzes the transfer of acetyl group from acetyl coenzyme A to glucosamine-1-phosphate (GlcN-1-P) to produce N-acetylglucosamine-1-phosphate (GlcNAc-1-P), which is converted into UDP-GlcNAc by the transfer of uridine 5-monophosphate (from uridine 5-triphosphate), a reaction catalyzed by the N-terminal domain. The chain is Bifunctional protein GlmU from Helicobacter hepaticus (strain ATCC 51449 / 3B1).